Reading from the N-terminus, the 148-residue chain is Transcriptional regulator MraZ (148 aa).

SpoVT-AbrB domains are found at residues 5 to 53 (ETAI…VEKE) and 82 to 125 (SALL…SEQA).

The protein belongs to the MraZ family. Forms oligomers.

The protein resides in the cytoplasm. Its subcellular location is the nucleoid. This is Transcriptional regulator MraZ from Xylella fastidiosa (strain Temecula1 / ATCC 700964).